A 188-amino-acid polypeptide reads, in one-letter code: F7-2 fimbrial protein (188 aa).

The first 21 residues, 1–21 (MIKSVIAGAVAMAVVSFGAYA), serve as a signal peptide directing secretion. Cys43 and Cys82 form a disulfide bridge.

Belongs to the fimbrial protein family.

It localises to the fimbrium. Functionally, fimbriae (also called pili), polar filaments radiating from the surface of the bacterium to a length of 0.5-1.5 micrometers and numbering 100-300 per cell, enable bacteria to colonize the epithelium of specific host organs. The protein is F7-2 fimbrial protein (F7-2) of Escherichia coli O6:H1 (strain CFT073 / ATCC 700928 / UPEC).